Reading from the N-terminus, the 824-residue chain is ABC transporter B family member 7 (824 aa).

The interval 41–101 (RNSVKFNLDT…NKNNKNKINN (61 aa)) is disordered. The segment covering 63–101 (NNNKNNNNNNNNNNNNNNNNNNNNNNNNNNKNNKNKINN) has biased composition (low complexity). 6 helical membrane-spanning segments follow: residues 164–184 (IWYF…QLAL), 252–272 (WIII…LLFT), 325–345 (LSTL…LVFL), 347–367 (WKVT…FLVF), 431–451 (AFWI…IYGF), and 461–481 (ILLL…NGLI). Positions 167–489 (FVFAFLALSI…LIGSINEIQK (323 aa)) constitute an ABC transmembrane type-1 domain. In terms of domain architecture, ABC transporter spans 521-767 (ISFDNVYFNN…STSFYVTSVL (247 aa)). An ATP-binding site is contributed by 570–576 (GPSQSKE). A disordered region spans residues 772 to 813 (NKYNNNNNNNNNNNNNNNNNNNNNNNNNNNNNNNNNNNNINN).

It belongs to the ABC transporter superfamily. ABCB family.

It is found in the membrane. The protein is ABC transporter B family member 7 (abcB7) of Dictyostelium discoideum (Social amoeba).